A 60-amino-acid polypeptide reads, in one-letter code: UPF0434 protein Aave_2563 (60 aa).

Belongs to the UPF0434 family.

The sequence is that of UPF0434 protein Aave_2563 from Paracidovorax citrulli (strain AAC00-1) (Acidovorax citrulli).